A 114-amino-acid chain; its full sequence is Hemerythrin subunit 2 (114 aa).

Positions 26, 55, 59, 74, 78, 102, and 107 each coordinate Fe cation.

The protein belongs to the hemerythrin family.

Functionally, hemerythrin is a respiratory protein in blood cells of certain marine worms. The oxygen-binding site in each chain contains two iron atoms. The polypeptide is Hemerythrin subunit 2 (Golfingia vulgaris (Marine worm)).